The primary structure comprises 245 residues: Demethylmenaquinone methyltransferase (245 aa).

S-adenosyl-L-methionine is bound by residues T69, D90, and 118–119; that span reads DC.

Belongs to the class I-like SAM-binding methyltransferase superfamily. MenG/UbiE family.

It carries out the reaction a 2-demethylmenaquinol + S-adenosyl-L-methionine = a menaquinol + S-adenosyl-L-homocysteine + H(+). It functions in the pathway quinol/quinone metabolism; menaquinone biosynthesis; menaquinol from 1,4-dihydroxy-2-naphthoate: step 2/2. Its function is as follows. Methyltransferase required for the conversion of demethylmenaquinol (DMKH2) to menaquinol (MKH2). The sequence is that of Demethylmenaquinone methyltransferase from Porphyromonas gingivalis (strain ATCC 33277 / DSM 20709 / CIP 103683 / JCM 12257 / NCTC 11834 / 2561).